Here is a 392-residue protein sequence, read N- to C-terminus: tRNA(Met) cytidine acetate ligase (392 aa).

Residues 7 to 20 (VVEY…HQLH), Gly-101, Asn-162, and 187 to 188 (RI) contribute to the ATP site.

It belongs to the TmcAL family.

It is found in the cytoplasm. The catalysed reaction is cytidine(34) in elongator tRNA(Met) + acetate + ATP = N(4)-acetylcytidine(34) in elongator tRNA(Met) + AMP + diphosphate. Functionally, catalyzes the formation of N(4)-acetylcytidine (ac(4)C) at the wobble position of elongator tRNA(Met), using acetate and ATP as substrates. First activates an acetate ion to form acetyladenylate (Ac-AMP) and then transfers the acetyl group to tRNA to form ac(4)C34. This Listeria welshimeri serovar 6b (strain ATCC 35897 / DSM 20650 / CCUG 15529 / CIP 8149 / NCTC 11857 / SLCC 5334 / V8) protein is tRNA(Met) cytidine acetate ligase.